A 478-amino-acid chain; its full sequence is uncharacterized protein (478 aa).

One can recognise an RCK N-terminal domain in the interval 2–120 (MNMITVIGFG…NIDKIINILE (119 aa)).

This is an uncharacterized protein from Methanocaldococcus jannaschii (strain ATCC 43067 / DSM 2661 / JAL-1 / JCM 10045 / NBRC 100440) (Methanococcus jannaschii).